Reading from the N-terminus, the 291-residue chain is Pyridoxal kinase PdxY (291 aa).

Residues serine 9 and 44–45 contribute to the substrate site; that span reads TQ. ATP contacts are provided by residues aspartate 112, valine 144, glutamate 149, lysine 182, and 207–210; that span reads RPHL. Aspartate 221 provides a ligand contact to substrate.

The protein belongs to the pyridoxine kinase family. PdxY subfamily. As to quaternary structure, homodimer. Mg(2+) is required as a cofactor.

It catalyses the reaction pyridoxal + ATP = pyridoxal 5'-phosphate + ADP + H(+). The protein operates within cofactor metabolism; pyridoxal 5'-phosphate salvage; pyridoxal 5'-phosphate from pyridoxal: step 1/1. In terms of biological role, pyridoxal kinase involved in the salvage pathway of pyridoxal 5'-phosphate (PLP). Catalyzes the phosphorylation of pyridoxal to PLP. The polypeptide is Pyridoxal kinase PdxY (Photobacterium profundum (strain SS9)).